The following is a 232-amino-acid chain: Ornithine carbamoyltransferase (232 aa).

Carbamoyl phosphate is bound by residues Q15, R39, and 66 to 69 (HPTQ). Residues N99, D163, and 167–168 (SM) each bind L-ornithine. Residues 204 to 207 (HCLP) and T232 each bind carbamoyl phosphate.

Belongs to the aspartate/ornithine carbamoyltransferase superfamily. OTCase family.

It is found in the cytoplasm. The enzyme catalyses carbamoyl phosphate + L-ornithine = L-citrulline + phosphate + H(+). It participates in amino-acid biosynthesis; L-arginine biosynthesis; L-arginine from L-ornithine and carbamoyl phosphate: step 1/3. In terms of biological role, reversibly catalyzes the transfer of the carbamoyl group from carbamoyl phosphate (CP) to the N(epsilon) atom of ornithine (ORN) to produce L-citrulline. The sequence is that of Ornithine carbamoyltransferase (argF) from Neisseria perflava.